The primary structure comprises 1863 residues: Breast cancer type 1 susceptibility protein homolog (1863 aa).

N-acetylmethionine is present on M1. The segment at 24 to 65 (CPICLELIKEPVSTKCDHIFCKFCMLKLLNQKKGPSQCPLCK) adopts an RING-type zinc-finger fold. A Glycyl lysine isopeptide (Lys-Gly) (interchain with G-Cter in SUMO2) cross-link involves residue K109. Phosphoserine is present on S114. The segment at 230–267 (ETDVTNTEHHQPSNNDLNTTEKRATERHPEKYQGSSVS) is disordered. The span at 248–260 (TTEKRATERHPEK) shows a compositional bias: basic and acidic residues. Residue K301 forms a Glycyl lysine isopeptide (Lys-Gly) (interchain with G-Cter in SUMO2) linkage. The disordered stretch occupies residues 306–338 (NKSKQPGLARSQHNRWAGSKETCNDRRTPSTEK). Over residues 327-338 (TCNDRRTPSTEK) the composition is skewed to basic and acidic residues. K339 is covalently cross-linked (Glycyl lysine isopeptide (Lys-Gly) (interchain with G-Cter in SUMO2)). Phosphoserine occurs at positions 395, 398, 423, and 434. Glycyl lysine isopeptide (Lys-Gly) (interchain with G-Cter in SUMO2) cross-links involve residues K443, K459, and K519. S551 carries the phosphoserine modification. Residues K583 and K654 each participate in a glycyl lysine isopeptide (Lys-Gly) (interchain with G-Cter in SUMO2) cross-link. The segment at 650–739 (IKKKKYNQMP…EKEEKLETVK (90 aa)) is disordered. Phosphoserine is present on residues S694, S708, and S725. Over residues 705–716 (APGSFTNCSNTS) the composition is skewed to polar residues. Residues 727–737 (PREEKEEKLET) are compositionally biased toward basic and acidic residues. Residues K734 and K739 each participate in a glycyl lysine isopeptide (Lys-Gly) (interchain with G-Cter in SUMO2) cross-link. A phosphoserine mark is found at S753 and S840. The interval 896-915 (SPKVTFEREQKEQNQGKNES) is disordered. Basic and acidic residues predominate over residues 900 to 909 (TFEREQKEQN). Glycyl lysine isopeptide (Lys-Gly) (interchain with G-Cter in SUMO2) cross-links involve residues K918 and K987. A Phosphoserine; by CHEK2 modification is found at S988. S1009 carries the post-translational modification Phosphoserine. Residue K1079 forms a Glycyl lysine isopeptide (Lys-Gly) (interchain with G-Cter in SUMO2) linkage. S1143, S1189, S1191, S1211, S1217, S1218, S1280, S1328, S1336, S1342, and S1387 each carry phosphoserine. The tract at residues 1181–1216 (VQRGELSRSPSPFTHTHLAQGYRRGAKKLESSEENL) is disordered. Positions 1322–1395 (KQMRHQSESQ…SSQSDILTTQ (74 aa)) are disordered. Positions 1373-1395 (ESETSVSEDCSGLSSQSDILTTQ) are enriched in polar residues. The residue at position 1394 (T1394) is a Phosphothreonine. The interaction with PALB2 stretch occupies residues 1397–1424 (RDTMQDNLIKLQQEMAELEAVLEQHGSQ). A phosphoserine mark is found at S1423, S1457, S1524, and S1542. Positions 1440 to 1505 (EDLQNPEQST…SSPSKCPSLD (66 aa)) are disordered. The span at 1444–1470 (NPEQSTSEKAVLTSQKSSEYPISQNPE) shows a compositional bias: polar residues. Positions 1565 to 1642 (ESGISLFSDD…SREKPELTAS (78 aa)) are disordered. A compositionally biased stretch (polar residues) spans 1610-1624 (SAQSPAAAHTTNTAG). 2 BRCT domains span residues 1642–1736 (STER…DFEV) and 1756–1855 (QDRK…TYLI).

As to quaternary structure, heterodimer with BARD1. Part of the BRCA1-associated genome surveillance complex (BASC), which contains BRCA1, MSH2, MSH6, MLH1, ATM, BLM, PMS2 and the MRE11-RAD50-NBN protein (MRN) complex. This association could be a dynamic process changing throughout the cell cycle and within subnuclear domains. Component of the BRCA1-A complex, at least composed of BRCA1, BARD1, UIMC1/RAP80, ABRAXAS1, BRCC3/BRCC36, BABAM2 and BABAM1/NBA1. Interacts (via the BRCT domains) with ABRAXAS1 (phosphorylated form); this is important for recruitment to sites of DNA damage. Can form a heterotetramer with two molecules of ABRAXAS1 (phosphorylated form). Component of the BRCA1-RBBP8 complex. Interacts (via the BRCT domains) with RBBP8 ('Ser-327' phosphorylated form); the interaction ubiquitinates RBBP8, regulates CHEK1 activation, and involves RBBP8 in BRCA1-dependent G2/M checkpoint control on DNA damage. Associates with RNA polymerase II holoenzyme. Interacts with SMC1A, NELFB, DCLRE1C, CLSPN. CHEK1, CHEK2, BAP1, BRCC3, UBXN1 and PCLAF. Interacts (via BRCT domains) with BRIP1 (phosphorylated form). Interacts with FANCD2 (ubiquitinated form). Interacts with H2AX (phosphorylated on 'Ser-140'). Interacts (via the BRCT domains) with ACACA (phosphorylated form); the interaction prevents dephosphorylation of ACACA. Part of a BRCA complex containing BRCA1, BRCA2 and PALB2. Interacts directly with PALB2; the interaction is essential for its function in HRR. Interacts directly with BRCA2; the interaction occurs only in the presence of PALB2 which serves as the bridging protein. Interacts (via the BRCT domains) with LMO4; the interaction represses the transcriptional activity of BRCA1. Interacts (via the BRCT domains) with CCAR2 (via N-terminus); the interaction represses the transcriptional activator activity of BRCA1. Interacts with EXD2. Interacts (via C-terminus) with DHX9; this interaction is direct and links BRCA1 to the RNA polymerase II holoenzyme. Interacts with DNA helicase ZGRF1; the interaction is increased following DNA damage induction. In terms of processing, phosphorylated in response to IR, UV, and various stimuli that cause checkpoint activation, probably by ATM or ATR. Phosphorylation at Ser-988 by CHEK2 regulates mitotic spindle assembly. Phosphorylation by AURKA regulates centrosomal microtubule nucleation. Autoubiquitinated, undergoes 'Lys-6'-linked polyubiquitination. 'Lys-6'-linked polyubiquitination does not promote degradation.

It is found in the nucleus. It localises to the chromosome. The protein localises to the cytoplasm. The enzyme catalyses S-ubiquitinyl-[E2 ubiquitin-conjugating enzyme]-L-cysteine + [acceptor protein]-L-lysine = [E2 ubiquitin-conjugating enzyme]-L-cysteine + N(6)-ubiquitinyl-[acceptor protein]-L-lysine.. Its function is as follows. E3 ubiquitin-protein ligase that specifically mediates the formation of 'Lys-6'-linked polyubiquitin chains and plays a central role in DNA repair by facilitating cellular responses to DNA damage. It is unclear whether it also mediates the formation of other types of polyubiquitin chains. The BRCA1-BARD1 heterodimer coordinates a diverse range of cellular pathways such as DNA damage repair, ubiquitination and transcriptional regulation to maintain genomic stability. Regulates centrosomal microtubule nucleation. Required for appropriate cell cycle arrests after ionizing irradiation in both the S-phase and the G2 phase of the cell cycle. Required for FANCD2 targeting to sites of DNA damage. Inhibits lipid synthesis by binding to inactive phosphorylated ACACA and preventing its dephosphorylation. Contributes to homologous recombination repair (HRR) via its direct interaction with PALB2, fine-tunes recombinational repair partly through its modulatory role in the PALB2-dependent loading of BRCA2-RAD51 repair machinery at DNA breaks. Component of the BRCA1-RBBP8 complex which regulates CHEK1 activation and controls cell cycle G2/M checkpoints on DNA damage via BRCA1-mediated ubiquitination of RBBP8. Acts as a transcriptional activator. The chain is Breast cancer type 1 susceptibility protein homolog (BRCA1) from Pan troglodytes (Chimpanzee).